A 509-amino-acid chain; its full sequence is MGLPWYRVHTVVLNDPGRLLSVHIMHTALVAGWAGSMALYELAVFDPSDPVLDPMWRQGMFVIPFMTRLGITNSWGGWNITGGTITNPGIWSYEGVAGAHIVFSGLCFLAAIWHWVYWDLEIFCDERTGKPSLDLPKIFGIHLFLAGVGCFGFGAFHVTGLFGPGIWVSDPYGLTGRVQSVNPAWGVDGFDPFVPGGIASHHIAAGTLGILAGLFHLSVRPPQRLYKGLRMGNIETVLSSSIAAVFFAAFVVAGTMWYGSATTPIELFGPTRYQWDQGYFQQEIYRRVGAGLAENQSLSEAWSKIPEKLAFYDYIGNNPAKGGLFRAGSMDNGDGIAVGWLGHPIFRDKEGRELFVRRMPTFFETFPVVLVDGDGIVRADVPFRRAESKYSVEQVGVTVEFYGGELNGVSYSDPATVKKYARRAQLGEIFELDRATLKSDGVFRSSPRGWFTFGHVSFALLFFFGHIWHGARTLFRDVFAGIDPDLDAQVEFGAFQKLGDPSTKKPVVS.

6 helical membrane passes run 21 to 36, 101 to 115, 140 to 156, 203 to 218, 237 to 252, and 457 to 472; these read SVHI…WAGS, IVFS…IWHW, GIHL…FGAF, IAAG…FHLS, VLSS…AFVV, and SFAL…HGAR.

This sequence belongs to the PsbB/PsbC family. PsbB subfamily. In terms of assembly, PSII is composed of 1 copy each of membrane proteins PsbA, PsbB, PsbC, PsbD, PsbE, PsbF, PsbH, PsbI, PsbJ, PsbK, PsbL, PsbM, PsbT, PsbX, PsbY, PsbZ, Psb30/Ycf12, at least 3 peripheral proteins of the oxygen-evolving complex and a large number of cofactors. It forms dimeric complexes. Binds multiple chlorophylls. PSII binds additional chlorophylls, carotenoids and specific lipids. is required as a cofactor.

Its subcellular location is the plastid. The protein localises to the chloroplast thylakoid membrane. Functionally, one of the components of the core complex of photosystem II (PSII). It binds chlorophyll and helps catalyze the primary light-induced photochemical processes of PSII. PSII is a light-driven water:plastoquinone oxidoreductase, using light energy to abstract electrons from H(2)O, generating O(2) and a proton gradient subsequently used for ATP formation. The protein is Photosystem II CP47 reaction center protein of Cicer arietinum (Chickpea).